Reading from the N-terminus, the 339-residue chain is UPF0324 membrane protein CPE0129 (339 aa).

Helical transmembrane passes span 12–30 (ILPG…EFLG), 35–54 (TIGA…NTLF), 90–112 (LGFN…TYFI), 122–144 (YSLL…VSPV), 156–178 (ITIV…SILY), 210–232 (VVEL…VLVF), 259–281 (WFII…GILG), and 316–338 (MLYG…NIFI).

The protein belongs to the UPF0324 family.

The protein resides in the cell membrane. This Clostridium perfringens (strain 13 / Type A) protein is UPF0324 membrane protein CPE0129.